The sequence spans 100 residues: Large ribosomal subunit protein uL23 (100 aa).

The protein belongs to the universal ribosomal protein uL23 family. As to quaternary structure, part of the 50S ribosomal subunit. Contacts protein L29, and trigger factor when it is bound to the ribosome.

In terms of biological role, one of the early assembly proteins it binds 23S rRNA. One of the proteins that surrounds the polypeptide exit tunnel on the outside of the ribosome. Forms the main docking site for trigger factor binding to the ribosome. This Aeromonas hydrophila subsp. hydrophila (strain ATCC 7966 / DSM 30187 / BCRC 13018 / CCUG 14551 / JCM 1027 / KCTC 2358 / NCIMB 9240 / NCTC 8049) protein is Large ribosomal subunit protein uL23.